The primary structure comprises 119 residues: Protein phosphatase EYA4 (119 aa).

The protein belongs to the HAD-like hydrolase superfamily. EYA family. Requires Mg(2+) as cofactor.

The protein resides in the cytoplasm. It is found in the nucleus. The catalysed reaction is O-phospho-L-tyrosyl-[protein] + H2O = L-tyrosyl-[protein] + phosphate. Its function is as follows. Tyrosine phosphatase that specifically dephosphorylates 'Tyr-142' of histone H2AX (H2AXY142ph). 'Tyr-142' phosphorylation of histone H2AX plays a central role in DNA repair and acts as a mark that distinguishes between apoptotic and repair responses to genotoxic stress. Promotes efficient DNA repair by dephosphorylating H2AX, promoting the recruitment of DNA repair complexes containing MDC1. Its function as histone phosphatase probably explains its role in transcription regulation during organogenesis. May be involved in development of the eye. This is Protein phosphatase EYA4 (eya4) from Takifugu rubripes (Japanese pufferfish).